A 221-amino-acid polypeptide reads, in one-letter code: Protein-L-isoaspartate O-methyltransferase (221 aa).

Serine 68 is a catalytic residue.

It belongs to the methyltransferase superfamily. L-isoaspartyl/D-aspartyl protein methyltransferase family.

It is found in the cytoplasm. It catalyses the reaction [protein]-L-isoaspartate + S-adenosyl-L-methionine = [protein]-L-isoaspartate alpha-methyl ester + S-adenosyl-L-homocysteine. In terms of biological role, catalyzes the methyl esterification of L-isoaspartyl residues in peptides and proteins that result from spontaneous decomposition of normal L-aspartyl and L-asparaginyl residues. It plays a role in the repair and/or degradation of damaged proteins. This is Protein-L-isoaspartate O-methyltransferase from Desulfosudis oleivorans (strain DSM 6200 / JCM 39069 / Hxd3) (Desulfococcus oleovorans).